The primary structure comprises 856 residues: MVTDDSNSSGRIKSHVDDDDDGEEEEDRLEGLENRLSELKRKIQGERVRSIKEKFEANRKKVDAHVSPFSSAASSRATAEDNGNSNMLSSRMRMPLCKLNGFSHGVGDRDYVPTKDVISASVKLPIAERIPPYTTWIFLDRNQRMAEDQSVVGRRQIYYEQHGGETLICSDSEEEPEPEEEKREFSEGEDSIIWLIGQEYGMGEEVQDALCQLLSVDASDILERYNELKLKDKQNTEEFSNSGFKLGISLEKGLGAALDSFDNLFCRRCLVFDCRLHGCSQPLISASEKQPYWSDYEGDRKPCSKHCYLQLKAVREVPETCSNFASKAEEKASEEECSKAVSSDVPHAAASGVSLQVEKTDIGIKNVDSSSGVEQEHGIRGKREVPILKDSNDLPNLSNKKQKTAASDTKMSFVNSVPSLDQALDSTKGDQGGTTDNKVNRDSEADAKEVGEPIPDNSVHDGGSSICQPHHGSGNGAIIIAEMSETSRPSTEWNPIEKDLYLKGVEIFGRNSCLIARNLLSGLKTCLDVSNYMRENEVSVFRRSSTPNLLLDDGRTDPGNDNDEVPPRTRLFRRKGKTRKLKYSTKSAGHPSVWKRIAGGKNQSCKQYTPCGCLSMCGKDCPCLTNETCCEKYCGCSKSCKNRFRGCHCAKSQCRSRQCPCFAAGRECDPDVCRNCWVSCGDGSLGEAPRRGEGQCGNMRLLLRQQQRILLGKSDVAGWGAFLKNSVSKNEYLGEYTGELISHHEADKRGKIYDRANSSFLFDLNDQYVLDAQRKGDKLKFANHSAKPNCYAKVMFVAGDHRVGIFANERIEASEELFYDYRYGPDQAPVWARKPEGSKKDDSAITHRRARKHQSH.

Polar residues predominate over residues 1 to 11 (MVTDDSNSSGR). Disordered regions lie at residues 1-34 (MVTDDSNSSGRIKSHVDDDDDGEEEEDRLEGLEN), 66-87 (VSPFSSAASSRATAEDNGNSNM), and 366-473 (NVDS…HHGS). Over residues 17–28 (DDDDDGEEEEDR) the composition is skewed to acidic residues. Positions 22 to 49 (GEEEEDRLEGLENRLSELKRKIQGERVR) form a coiled coil. Polar residues predominate over residues 68-87 (PFSSAASSRATAEDNGNSNM). A compositionally biased stretch (basic and acidic residues) spans 374 to 392 (EQEHGIRGKREVPILKDSN). The span at 393 to 419 (DLPNLSNKKQKTAASDTKMSFVNSVPS) shows a compositional bias: polar residues. Basic and acidic residues predominate over residues 438–451 (KVNRDSEADAKEVG). In terms of domain architecture, SANT spans 489 to 539 (PSTEWNPIEKDLYLKGVEIFGRNSCLIARNLLSGLKTCLDVSNYMRENEVS). In terms of domain architecture, CXC spans 594–693 (WKRIAGGKNQ…SLGEAPRRGE (100 aa)). One can recognise an SET domain in the interval 707-822 (QRILLGKSDV…ASEELFYDYR (116 aa)). Position 821 (Tyr-821) interacts with S-adenosyl-L-methionine. Residues 827 to 856 (QAPVWARKPEGSKKDDSAITHRRARKHQSH) are disordered. Basic and acidic residues predominate over residues 833–845 (RKPEGSKKDDSAI). The short motif at 838–845 (SKKDDSAI) is the Nuclear localization signal element. The segment covering 846–856 (THRRARKHQSH) has biased composition (basic residues).

This sequence belongs to the class V-like SAM-binding methyltransferase superfamily. Histone-lysine methyltransferase family. EZ subfamily. As to quaternary structure, component of the plant homeodomain / polycomb repressive complex 2 (PHD-PRC2) large complex during prolonged cold, composed of core PRC2 components (VRN2, EZA1, FIE and MSI1), and three related PHD finger proteins (VIL1, VIL2 and VIN3) that mediates histone H3 trimethylation on 'Lys-27' H3K27me3. Interacts with TAF13. Interacts with EOL1. Interacts (via SANT domain) with HXK1 in the nucleus.

It localises to the nucleus. It catalyses the reaction L-lysyl(27)-[histone H3] + 3 S-adenosyl-L-methionine = N(6),N(6),N(6)-trimethyl-L-lysyl(27)-[histone H3] + 3 S-adenosyl-L-homocysteine + 3 H(+). In terms of biological role, polycomb group (PcG) protein. Catalytic subunit of some PcG multiprotein complex, which methylates 'Lys-27' of histone H3, leading to transcriptional repression of the affected target genes, mainly abscisic acid (ABA) responsive elements. PcG proteins act by forming multiprotein complexes, which are required to maintain the transcriptionally repressive state of homeotic genes throughout development. PcG proteins are not required to initiate repression, but to maintain it during later stages of development. Forms a nuclear complex with CLF and HXK1 to target common glucose-responsive genes and regulate glucose signaling by glucose-mediated gene repression. Affects the recruitment of HXK1 to the target chromatin. In Arabidopsis thaliana (Mouse-ear cress), this protein is Histone-lysine N-methyltransferase EZA1.